A 213-amino-acid polypeptide reads, in one-letter code: Vacuolar protein sorting-associated protein 32 homolog 1 (213 aa).

Coiled-coil stretches lie at residues lysine 11–threonine 42 and threonine 118–glutamine 176. The disordered stretch occupies residues isoleucine 180–leucine 213.

The protein belongs to the SNF7 family. As to quaternary structure, component of the endosomal sorting required for transport complex III (ESCRT-III), composed at least of VPS2, VPS20, VPS24 and VPS32. Interacts with SKD1. Interacts with BRO1/ALIX.

It is found in the endosome. Functionally, component of the ESCRT-III complex, which is required for multivesicular bodies (MVBs) formation and sorting of endosomal cargo proteins into MVBs. The ESCRT-III complex is probably involved in the concentration of MVB cargo. This chain is Vacuolar protein sorting-associated protein 32 homolog 1 (VPS32.1), found in Arabidopsis thaliana (Mouse-ear cress).